A 295-amino-acid polypeptide reads, in one-letter code: Putative 23S rRNA (guanine-N(1)-)-methyltransferase (295 aa).

The Zn(2+) site is built by Cys11, Cys14, Cys31, and His35. Residues Tyr74, 116-117, and His204 contribute to the S-adenosyl-L-methionine site; that span reads TG.

It belongs to the methyltransferase superfamily. RlmA family.

Confers strong resistance to mycinamicin (MM) and tylosin (TY). May function as methyltransferase. This is Putative 23S rRNA (guanine-N(1)-)-methyltransferase (myrA) from Micromonospora griseorubida.